A 355-amino-acid polypeptide reads, in one-letter code: 3-dehydroquinate synthase (355 aa).

NAD(+) contacts are provided by residues 71–76 (EGEERK), 105–109 (GVVGD), 129–130 (TS), K142, and K151. Zn(2+)-binding residues include E184, H246, and H263.

The protein belongs to the sugar phosphate cyclases superfamily. Dehydroquinate synthase family. The cofactor is NAD(+). Co(2+) serves as cofactor. Requires Zn(2+) as cofactor.

It localises to the cytoplasm. The catalysed reaction is 7-phospho-2-dehydro-3-deoxy-D-arabino-heptonate = 3-dehydroquinate + phosphate. It participates in metabolic intermediate biosynthesis; chorismate biosynthesis; chorismate from D-erythrose 4-phosphate and phosphoenolpyruvate: step 2/7. Functionally, catalyzes the conversion of 3-deoxy-D-arabino-heptulosonate 7-phosphate (DAHP) to dehydroquinate (DHQ). This is 3-dehydroquinate synthase from Streptococcus pneumoniae serotype 4 (strain ATCC BAA-334 / TIGR4).